We begin with the raw amino-acid sequence, 713 residues long: Signal transducer and activator of transcription 1 (713 aa).

Residues 477–574 (WCIGFISKHD…EEMLRYFESE (98 aa)) enclose the SH2 domain.

The protein belongs to the transcription factor STAT family. As to quaternary structure, forms a homodimer or a heterodimer with a related family member.

It is found in the cytoplasm. It localises to the nucleus. In terms of biological role, carries out a dual function: signal transduction and activation of transcription. Activated STAT proteins play a role in repression of dauer formation. Neuronal expression is held in check by negative signals through the TGF-beta pathway that target the daf-3 transcription factor. This chain is Signal transducer and activator of transcription 1, found in Caenorhabditis briggsae.